The chain runs to 974 residues: MAAQGEPGYLAAQSDPGSNSERSTDSPVPGSEDDLVAGATLHSPEWSEERFRVDRKKLEAMLQAAAEGKGRSGEDFFQKIMEETNTQIAWPSKLKIGAKSKKDPHIKVSGKKEDVKEAKEMIMSVLDTKSNRVTLKMDVSHTEHSHVIGKGGNNIKKVMEETGCHIHFPDSNRNNQAEKSNQVSIAGQPAGVESARVRIRELLPLVLMFELPIAGILQPVPDPNSPSIQHISQTYNISVSFKQRSRMYGATVIVRGSQNNTSAVKEGTAMLLEHLAGSLASAIPVSTQLDIAAQHHLFMMGRNGSNIKHIMQRTGAQIHFPDPSNPQKKSTVYLQGTIESVCLARQYLMGCLPLVLMFDMKEEIEVDPQFIAQLMEQLDVFISIKPKPKQPSKSVIVKSVERNALNMYEARKCLLGLESSGVTIATSPSPASCPAGLACPSLDILASAGLGLTGLGLLGPTTLSLNTSTTPNSLLNALNSSVSPLQSPSSGTPSPTLWAPPLANTSSATGFSAIPHLMIPSTAQATLTNILLSGVPTYGHTAPSPPPGLTPVDVHINSMQTEGKKISAALNGHAQSPDIKYGAISTSSLGEKVLSANHGDPSIQTSGSEQTSPKSSPTEGCNDAFVEVGMPRSPSHSGNAGDLKQMMCPSKVSCAKRQTVELLQGTKNSHLHSTDRLLSDPELSATESPLADKKAPGSERAAERAAAAQQNSERAHLAPRSSYVNMQAFDYEQKKLLATKAMLKKPVVTEVRTPTNTWSGLGFSKSMPAETIKELRRANHVSYKPTMTTTYEGSSMSLSRSNSREHLGGGSESDNWRDRNGIGPGSHSEFAASIGSPKRKQNKSTEHYLSSSNYMDCISSLTGSNGCNLNSSFKGSDLPELFSKLGLGKYTDVFQQQEIDLQTFLTLTDQDLKELGITTFGARRKMLLAISELNKNRRKLFESPNARTSFLEGGASGRLPRQYHSDIASVSGRW.

The tract at residues 1–50 (MAAQGEPGYLAAQSDPGSNSERSTDSPVPGSEDDLVAGATLHSPEWSEER) is disordered. A phosphoserine mark is found at Ser-26, Ser-31, and Ser-43. KH domains follow at residues 132-199 (RVTL…RVRI) and 284-348 (PVST…RQYL). At Lys-398 the chain carries N6-acetyllysine. Phosphoserine occurs at positions 576, 612, and 679. Disordered regions lie at residues 593–644 (VLSA…GDLK), 665–719 (GTKN…HLAP), and 783–846 (YKPT…KSTE). The span at 602-619 (SIQTSGSEQTSPKSSPTE) shows a compositional bias: polar residues. Over residues 690–703 (LADKKAPGSERAAE) the composition is skewed to basic and acidic residues. The SAM domain maps to 873-936 (FKGSDLPELF…LLAISELNKN (64 aa)).

This sequence belongs to the BicC family. As to quaternary structure, interacts (via KH domains) with ANKS6 (via SAM domain) in an RNA-dependent manner. Interacts with ANKS3.

Its subcellular location is the cytoplasm. Its function is as follows. Putative RNA-binding protein. Acts as a negative regulator of Wnt signaling. May be involved in regulating gene expression during embryonic development. The protein is Protein bicaudal C homolog 1 (BICC1) of Homo sapiens (Human).